The sequence spans 188 residues: Elongation factor P (188 aa).

K34 carries the N6-(3,6-diaminohexanoyl)-5-hydroxylysine modification.

This sequence belongs to the elongation factor P family. May be beta-lysylated on the epsilon-amino group of Lys-34 by the combined action of EpmA and EpmB, and then hydroxylated on the C5 position of the same residue by EpmC (if this protein is present). Lysylation is critical for the stimulatory effect of EF-P on peptide-bond formation. The lysylation moiety may extend toward the peptidyltransferase center and stabilize the terminal 3-CCA end of the tRNA. Hydroxylation of the C5 position on Lys-34 may allow additional potential stabilizing hydrogen-bond interactions with the P-tRNA.

Its subcellular location is the cytoplasm. The protein operates within protein biosynthesis; polypeptide chain elongation. Involved in peptide bond synthesis. Alleviates ribosome stalling that occurs when 3 or more consecutive Pro residues or the sequence PPG is present in a protein, possibly by augmenting the peptidyl transferase activity of the ribosome. Modification of Lys-34 is required for alleviation. This chain is Elongation factor P, found in Erwinia tasmaniensis (strain DSM 17950 / CFBP 7177 / CIP 109463 / NCPPB 4357 / Et1/99).